A 551-amino-acid chain; its full sequence is Eukaryotic translation initiation factor 3 subunit D-2 (551 aa).

A disordered region spans residues 108–152; sequence RTRGRTGRGTPNIASLGGSTAGGATASSTKYGKGRHTRNTQNVGR. Low complexity predominate over residues 115–136; that stretch reads RGTPNIASLGGSTAGGATASST. The tract at residues 290–304 is RNA gate; that stretch reads QFDLLTVNETSVEPP. The disordered stretch occupies residues 527 to 551; the sequence is PENAFDSDRDEEEESSEPLSNSNDN.

The protein belongs to the eIF-3 subunit D family. In terms of assembly, component of the eukaryotic translation initiation factor 3 (eIF-3) complex. The eIF-3 complex interacts with pix.

Its subcellular location is the cytoplasm. In terms of biological role, mRNA cap-binding component of the eukaryotic translation initiation factor 3 (eIF-3) complex, which is involved in protein synthesis of a specialized repertoire of mRNAs and, together with other initiation factors, stimulates binding of mRNA and methionyl-tRNAi to the 40S ribosome. The eIF-3 complex specifically targets and initiates translation of a subset of mRNAs involved in cell proliferation. In the eIF-3 complex, eif3d specifically recognizes and binds the 7-methylguanosine cap of a subset of mRNAs. The sequence is that of Eukaryotic translation initiation factor 3 subunit D-2 from Drosophila simulans (Fruit fly).